Here is a 1242-residue protein sequence, read N- to C-terminus: Structural polyprotein (1242 aa).

The necessary for nucleocapsid assembly and virus assembly stretch occupies residues 1-36 (MFPYPTLNYSPMAPVNPMAYRDPNPPRRRWRPFRPP). The disordered stretch occupies residues 1–104 (MFPYPTLNYS…KQKPGKRQRM (104 aa)). Residues 37-70 (LAAQIEDLRRSIANLTFKQRAPNPPAGPPAKRKK) are host transcription inhibition. The short motif at 44–51 (LRRSIANL) is the Supraphysiological nuclear export signal element. Residues 66–104 (AKRKKPAPKPKPAAPKKKRQPPPAKKQKRKQKPGKRQRM) are compositionally biased toward basic residues. Positions 67 to 70 (KRKK) match the Nuclear localization signal motif. The binding to the viral RNA stretch occupies residues 83–113 (KRQPPPAKKQKRKQKPGKRQRMCMKLESDKT). Residues 98–112 (PGKRQRMCMKLESDK) are ribosome-binding. Serine 110 bears the Phosphoserine mark. In terms of domain architecture, Peptidase S3 spans 112-261 (KTFPILLNGQ…KDTPEGSEPW (150 aa)). The residue at position 113 (threonine 113) is a Phosphothreonine. Residues histidine 138, aspartate 160, and serine 212 each act as charge relay system in the active site. Positions 262 to 273 (SLTTVMCVLANI) are functions as an uncleaved signal peptide for the precursor of protein E3/E2. N-linked (GlcNAc...) asparagine; by host glycosylation is present at asparagine 272. Residues 325-688 (DLETHFTQYK…YYYNRYPMTT (364 aa)) lie on the Extracellular side of the membrane. Residues 689 to 709 (IVGLCTCAAIIMVSCITSVWL) form a helical membrane-spanning segment. Residues 710-744 (LCRTRNLCITPYRLAPNAQVPILLAVLCCVKPTRA) lie on the Cytoplasmic side of the membrane. Residues cysteine 717, cysteine 737, and cysteine 738 are each lipidated (S-palmitoyl cysteine; by host). The tract at residues 717–737 (CITPYRLAPNAQVPILLAVLC) is transient transmembrane before p62-6K protein processing. Over 745–759 (DDTLQVLNYLWNNNQ) the chain is Extracellular. 2 consecutive transmembrane segments (helical) span residues 760 to 780 (NFFW…MRML) and 781 to 801 (RCLL…GAAA). The Extracellular portion of the chain corresponds to 802–1218 (YEHTAVMPNK…WSWLKVLVGS (417 aa)). Intrachain disulfides connect cysteine 850-cysteine 915, cysteine 863-cysteine 895, cysteine 864-cysteine 897, cysteine 869-cysteine 879, cysteine 1061-cysteine 1073, cysteine 1103-cysteine 1178, cysteine 1108-cysteine 1182, and cysteine 1130-cysteine 1172. An E1 fusion peptide loop region spans residues 885-902 (VYPFMWGGAYCFCDTENT). A helical membrane pass occupies residues 1219–1239 (TSAFIVLGLIATAVVALVLFT). At 1240 to 1242 (HKH) the chain is on the cytoplasmic side.

Part of a tetrameric complex composed of host CRM1, host importin alpha/beta dimer and the viral capsid; this complex blocks the receptor-mediated transport through the nuclear pore. Interacts with host phosphatase PPP1CA; this interaction dephosphorylates the capsid protein, which increases its ability to bind to the viral genome. Interacts with host karyopherin KPNA4; this interaction allows the nuclear import of the viral capsid protein. Interacts with spike glycoprotein E2. Interacts with host IRAK1; the interaction leads to inhibition of IRAK1-dependent signaling. As to quaternary structure, the precursor of protein E3/E2 and E1 form a heterodimer shortly after synthesis. In terms of assembly, the precursor of protein E3/E2 and E1 form a heterodimer shortly after synthesis. Processing of the precursor of protein E3/E2 into E2 and E3 results in a heterodimer of the spike glycoproteins E2 and E1. Spike at virion surface are constituted of three E2-E1 heterodimers. After target cell attachment and endocytosis, E1 change conformation to form homotrimers. Interacts with 6K protein. Processing of the precursor of protein E3/E2 into E2 and E3 results in a heterodimer of the spike glycoproteins E2 and E1. Spike at virion surface are constituted of three E2-E1 heterodimers. Interacts with 6K protein. As to quaternary structure, interacts with spike glycoprotein E1. Interacts with spike glycoprotein E2. Structural polyprotein: Specific enzymatic cleavages in vivo yield mature proteins. Capsid protein is auto-cleaved during polyprotein translation, unmasking a signal peptide at the N-terminus of the precursor of E3/E2. The remaining polyprotein is then targeted to the host endoplasmic reticulum, where host signal peptidase cleaves it into pE2, 6K and E1 proteins. pE2 is further processed to mature E3 and E2 by host furin in trans-Golgi vesicle. Post-translationally, phosphorylated on serine and threonine residues. In terms of processing, palmitoylated via thioester bonds. These palmitoylations may induce disruption of the C-terminus transmembrane. This would result in the reorientation of E2 C-terminus from lumenal to cytoplasmic side. N-glycosylated. Post-translationally, palmitoylated via thioester bonds.

It localises to the virion. Its subcellular location is the host cytoplasm. It is found in the host cell membrane. The protein localises to the host nucleus. The protein resides in the virion membrane. It carries out the reaction Autocatalytic release of the core protein from the N-terminus of the togavirus structural polyprotein by hydrolysis of a -Trp-|-Ser- bond.. In terms of biological role, forms an icosahedral capsid with a T=4 symmetry composed of 240 copies of the capsid protein surrounded by a lipid membrane through which penetrate 80 spikes composed of trimers of E1-E2 heterodimers. The capsid protein binds to the viral RNA genome at a site adjacent to a ribosome binding site for viral genome translation following genome release. Possesses a protease activity that results in its autocatalytic cleavage from the nascent structural protein. Following its self-cleavage, the capsid protein transiently associates with ribosomes, and within several minutes the protein binds to viral RNA and rapidly assembles into icosahedric core particles. The resulting nucleocapsid eventually associates with the cytoplasmic domain of the spike glycoprotein E2 at the cell membrane, leading to budding and formation of mature virions. In case of infection, new virions attach to target cells and after clathrin-mediated endocytosis their membrane fuses with the host endosomal membrane. This leads to the release of the nucleocapsid into the cytoplasm, followed by an uncoating event necessary for the genomic RNA to become accessible. The uncoating might be triggered by the interaction of capsid proteins with ribosomes. Binding of ribosomes would release the genomic RNA since the same region is genomic RNA-binding and ribosome-binding. Specifically inhibits interleukin-1 receptor-associated kinase 1/IRAK1-dependent signaling during viral entry, representing a means by which the alphaviruses may evade innate immune detection and activation prior to viral gene expression. Inhibits host transcription. Forms a tetrameric complex with XPO1/CRM1 and the nuclear import receptor importin. This complex blocks the central channel of host nuclear pores thereby inhibiting the receptor-mediated nuclear transport and thus the host mRNA and rRNA transcription. The inhibition of transcription is linked to a cytopathic effect on the host cell. Its function is as follows. Provides the signal sequence for the translocation of the precursor of protein E3/E2 to the host endoplasmic reticulum. Furin-cleaved E3 remains associated with spike glycoprotein E1 and mediates pH protection of the latter during the transport via the secretory pathway. After virion release from the host cell, the assembly protein E3 is gradually released in the extracellular space. Plays a role in viral attachment to target host cell, by binding to the cell receptor. Synthesized as a p62 precursor which is processed by furin at the cell membrane just before virion budding, giving rise to E2-E1 heterodimer. The p62-E1 heterodimer is stable, whereas E2-E1 is unstable and dissociate at low pH. p62 is processed at the last step, presumably to avoid E1 fusion activation before its final export to cell surface. E2 C-terminus contains a transitory transmembrane that would be disrupted by palmitoylation, resulting in reorientation of the C-terminal tail from lumenal to cytoplasmic side. This step is critical since E2 C-terminus is involved in budding by interacting with capsid proteins. This release of E2 C-terminus in cytoplasm occurs lately in protein export, and precludes premature assembly of particles at the endoplasmic reticulum membrane. Functionally, constitutive membrane protein involved in virus glycoprotein processing, cell permeabilization, and the budding of viral particles. Disrupts the calcium homeostasis of the cell, probably at the endoplasmic reticulum level. This leads to cytoplasmic calcium elevation. Because of its lipophilic properties, the 6K protein is postulated to influence the selection of lipids that interact with the transmembrane domains of the glycoproteins, which, in turn, affects the deformability of the bilayer required for the extreme curvature that occurs as budding proceeds. Present in low amount in virions, about 3% compared to viral glycoproteins. In terms of biological role, class II viral fusion protein. Fusion activity is inactive as long as E1 is bound to E2 in mature virion. After virus attachment to target cell and endocytosis, acidification of the endosome would induce dissociation of E1/E2 heterodimer and concomitant trimerization of the E1 subunits. This E1 trimer is fusion active, and promotes release of viral nucleocapsid in cytoplasm after endosome and viral membrane fusion. Efficient fusion requires the presence of cholesterol and sphingolipid in the target membrane. Fusion is optimal at levels of about 1 molecule of cholesterol per 2 molecules of phospholipids, and is specific for sterols containing a 3-beta-hydroxyl group. In Aedes (Human), this protein is Structural polyprotein.